We begin with the raw amino-acid sequence, 1258 residues long: Structural polyprotein (1258 aa).

The host transcription inhibition stretch occupies residues 41 to 75; that stretch reads PQAQQMQQLIAAVNTLAIRQNGTRTPGQQRRKRQP. The tract at residues 59–114 is disordered; it reads RQNGTRTPGQQRRKRQPNKPKRKQTPPKKQNPAKTKNKQKPQPPKPKKRKPGKRER. A Nuclear localization signal motif is present at residues 68 to 109; it reads QQRRKRQPNKPKRKQTPPKKQNPAKTKNKQKPQPPKPKKRKP. 2 stretches are compositionally biased toward basic residues: residues 69 to 84 and 93 to 114; these read QRRK…KQTP and TKNK…KRER. Residues 96–124 are binding to the viral RNA; that stretch reads KQKPQPPKPKKRKPGKRERKCMKIENDCI. The segment at 109 to 123 is ribosome-binding; that stretch reads PGKRERKCMKIENDC. Cysteine 123 and cysteine 138 are oxidised to a cystine. A Peptidase S3 domain is found at 123 to 271; sequence CIFEVKLEGK…RITPEGTEEW (149 aa). Residue histidine 149 is the Charge relay system of the active site. Positions 154 to 164 match the Nuclear export signal motif; that stretch reads IDNPDLAKLAF. Residues 165 to 170 are interaction with spike glycoprotein E2; it reads KKSSKY. The active-site Charge relay system is the aspartate 171. Residues 193–203 are dimerization of the capsid protein; it reads PEGHYNWHHGA. Serine 223 acts as the Charge relay system in catalysis. The dimerization of the capsid protein stretch occupies residues 229–233; sequence DNKGR. Positions 272-284 are functions as an uncleaved signal peptide for the precursor of protein E3/E2; sequence TALVTTACILSNL. Intrachain disulfides connect cysteine 279–cysteine 288, cysteine 293–cysteine 297, cysteine 296–cysteine 328, cysteine 356–cysteine 462, cysteine 359–cysteine 365, cysteine 428–cysteine 442, cysteine 490–cysteine 601, cysteine 538–cysteine 562, and cysteine 540–cysteine 557. Asparagine 283 carries N-linked (GlcNAc...) asparagine; by host glycosylation. Over 338–696 the chain is Extracellular; that stretch reads GLTEDYKAYK…PHEIFSYYYG (359 aa). Interaction with host Mxra8 receptor stretches follow at residues 363–366 and 399–401; these read QFCY and HSW. Residues 521 to 524 form an interaction with host Mxra8 receptor region; it reads TGNK. Asparagine 537 carries an N-linked (GlcNAc...) asparagine; by host glycan. Positions 553–559 are interaction with host Mxra8 receptor; sequence EFDNCEV. Residue asparagine 598 is glycosylated (N-linked (GlcNAc...) asparagine; by host). Residues 697–717 traverse the membrane as a helical segment; the sequence is LYPATTVAVCVGLACVILLAL. The Cytoplasmic segment spans residues 718–758; sequence SASCCLCVSARNKCLTPYALTPGAVVPCTLSLLCCAPRAKA. An interaction with the capsid protein region spans residues 726–730; sequence SARNK. S-palmitoyl cysteine; by host attachment occurs at residues cysteine 731, cysteine 751, and cysteine 752. A transient transmembrane before p62-6K protein processing region spans residues 731–751; that stretch reads CLTPYALTPGAVVPCTLSLLC. Cysteine 731 and cysteine 752 form a disulfide bridge. Topologically, residues 759-773 are extracellular; sequence ATFAETAAYLWAENQ. Residues 774–794 form a helical membrane-spanning segment; that stretch reads TVFWMQFAIPVACFMIVTYCL. Residues 795 to 796 are Cytoplasmic-facing; it reads RH. Residues 797 to 817 traverse the membrane as a helical segment; sequence LMLCCRTASFLVAVSLGMGAT. Extracellular loops occupy residues 818–819 and 820–1234; these read QA and YEHS…HTMG. Intrachain disulfides connect cysteine 868–cysteine 933, cysteine 881–cysteine 913, cysteine 882–cysteine 915, and cysteine 887–cysteine 897. The E1 fusion peptide loop stretch occupies residues 903–920; the sequence is VYPFLWGGAYCFCDSENT. 2 N-linked (GlcNAc...) asparagine; by host glycosylation sites follow: asparagine 960 and asparagine 1089. 4 disulfide bridges follow: cysteine 1078–cysteine 1090, cysteine 1120–cysteine 1195, cysteine 1125–cysteine 1199, and cysteine 1147–cysteine 1189. A helical membrane pass occupies residues 1235-1255; that stretch reads GATVVIAIGITIFLIVTCIAF. The S-palmitoyl cysteine; by host moiety is linked to residue cysteine 1252. Residues 1256-1258 are Cytoplasmic-facing; it reads SRH.

In terms of assembly, homodimer. Homomultimer. Interacts with host karyopherin KPNA4; this interaction allows the nuclear import of the viral capsid protein. Interacts with spike glycoprotein E2. Interacts with host IRAK1; the interaction leads to inhibition of IRAK1-dependent signaling. The precursor of protein E3/E2 and E1 form a heterodimer shortly after synthesis. As to quaternary structure, the precursor of protein E3/E2 and E1 form a heterodimer shortly after synthesis. Processing of the precursor of protein E3/E2 into E2 and E3 results in a heterodimer of the spike glycoproteins E2 and E1. Spike at virion surface are constituted of a trimer of E2-E1 heterodimers. After target cell attachment and endocytosis, E1 change conformation to form homotrimers. Interacts with 6K protein. In terms of assembly, interacts with spike glycoprotein E1. Processing of the precursor of protein E3/E2 into E2 and E3 results in a heterodimer of the spike glycoproteins E2 and E1. Spike at virion surface are constituted of a trimer of E2-E1 heterodimers. Interacts with 6K protein. Interacts with host MXRA8; this interaction mediates virus entry. Oligomer. Interacts with spike glycoprotein E1. Interacts with spike glycoprotein E2. Post-translationally, structural polyprotein: Specific enzymatic cleavages in vivo yield mature proteins. Capsid protein is auto-cleaved during polyprotein translation, unmasking a signal peptide at the N-terminus of the precursor of E3/E2. The remaining polyprotein is then targeted to the host endoplasmic reticulum, where host signal peptidase cleaves it into pE2, 6K and E1 proteins. pE2 is further processed to mature E3 and E2 by host furin in trans-Golgi vesicle. Palmitoylated via thioester bonds. These palmitoylations may induce disruption of the C-terminus transmembrane. This would result in the reorientation of E2 C-terminus from lumenal to cytoplasmic side. In terms of processing, N-glycosylated. Post-translationally, palmitoylated via thioester bonds.

Its subcellular location is the virion. The protein resides in the host cytoplasm. It localises to the host cell membrane. The protein localises to the host nucleus. It is found in the virion membrane. Its subcellular location is the host Golgi apparatus. The protein resides in the host trans-Golgi network. It localises to the host endoplasmic reticulum. The catalysed reaction is Autocatalytic release of the core protein from the N-terminus of the togavirus structural polyprotein by hydrolysis of a -Trp-|-Ser- bond.. In terms of biological role, forms an icosahedral capsid with a T=4 symmetry composed of 240 copies of the capsid protein surrounded by a lipid membrane through which penetrate 80 spikes composed of trimers of E1-E2 heterodimers. The capsid protein binds to the viral RNA genome at a site adjacent to a ribosome binding site for viral genome translation following genome release. Possesses a protease activity that results in its autocatalytic cleavage from the nascent structural protein. Following its self-cleavage, the capsid protein transiently associates with ribosomes, and within several minutes the protein binds to viral RNA and rapidly assembles into icosahedric core particles. The resulting nucleocapsid eventually associates with the cytoplasmic domain of the spike glycoprotein E2 at the cell membrane, leading to budding and formation of mature virions. In case of infection, new virions attach to target cells and after clathrin-mediated endocytosis their membrane fuses with the host endosomal membrane. This leads to the release of the nucleocapsid into the cytoplasm, followed by an uncoating event necessary for the genomic RNA to become accessible. The uncoating might be triggered by the interaction of capsid proteins with ribosomes. Binding of ribosomes would release the genomic RNA since the same region is genomic RNA-binding and ribosome-binding. Specifically inhibits interleukin-1 receptor-associated kinase 1/IRAK1-dependent signaling during viral entry, representing a means by which the alphaviruses may evade innate immune detection and activation prior to viral gene expression. Provides the signal sequence for the translocation of the precursor of protein E3/E2 to the host endoplasmic reticulum. Furin-cleaved E3 remains associated with spike glycoprotein E1 and mediates pH protection of the latter during the transport via the secretory pathway. After virion release from the host cell, the assembly protein E3 is gradually released in the extracellular space. Functionally, plays a role in viral attachment to target host cell, by binding to the cell receptor MXRA8. Synthesized as a p62 precursor which is processed by furin at the cell membrane just before virion budding, giving rise to E2-E1 heterodimer. The p62-E1 heterodimer is stable, whereas E2-E1 is unstable and dissociate at low pH. p62 is processed at the last step, presumably to avoid E1 fusion activation before its final export to cell surface. E2 C-terminus contains a transitory transmembrane that would be disrupted by palmitoylation, resulting in reorientation of the C-terminal tail from lumenal to cytoplasmic side. This step is critical since E2 C-terminus is involved in budding by interacting with capsid proteins. This release of E2 C-terminus in cytoplasm occurs lately in protein export, and precludes premature assembly of particles at the endoplasmic reticulum membrane. Its function is as follows. Acts as a viroporin that participates in virus glycoprotein processing and transport to the plasma membrane, cell permeabilization and budding of viral particles. Disrupts the calcium homeostasis of the cell, probably at the endoplasmic reticulum level. This leads to cytoplasmic calcium elevation. Because of its lipophilic properties, the 6K protein is postulated to influence the selection of lipids that interact with the transmembrane domains of the glycoproteins, which, in turn, affects the deformability of the bilayer required for the extreme curvature that occurs as budding proceeds. Present in low amount in virions, about 3% compared to viral glycoproteins. In terms of biological role, class II viral fusion protein. Fusion activity is inactive as long as E1 is bound to E2 in mature virion. After virus attachment to target cell and endocytosis, acidification of the endosome induce dissociation of E1/E2 heterodimer and concomitant trimerization of the E1 subunits. This E1 trimer is fusion active, and promotes release of viral nucleocapsid in cytoplasm after endosome and viral membrane fusion. Efficient fusion requires the presence of cholesterol and sphingolipid in the target membrane. The chain is Structural polyprotein from Middelburg virus.